The primary structure comprises 152 residues: Aspartate carbamoyltransferase regulatory chain (152 aa).

The Zn(2+) site is built by C108, C113, C137, and C140.

This sequence belongs to the PyrI family. In terms of assembly, contains catalytic and regulatory chains. Zn(2+) is required as a cofactor.

Its function is as follows. Involved in allosteric regulation of aspartate carbamoyltransferase. The sequence is that of Aspartate carbamoyltransferase regulatory chain from Neisseria gonorrhoeae (strain ATCC 700825 / FA 1090).